A 382-amino-acid chain; its full sequence is Pyrimidine monooxygenase RutA (382 aa).

Residues 68-69 (IK), N134, E143, 159-160 (RY), and S209 each bind FMN.

Belongs to the NtaA/SnaA/DszA monooxygenase family. RutA subfamily.

The enzyme catalyses uracil + FMNH2 + NADH + O2 = (Z)-3-ureidoacrylate + FMN + NAD(+) + H2O + H(+). The catalysed reaction is thymine + FMNH2 + NADH + O2 = (Z)-2-methylureidoacrylate + FMN + NAD(+) + H2O + H(+). Its function is as follows. Catalyzes the pyrimidine ring opening between N-3 and C-4 by an unusual flavin hydroperoxide-catalyzed mechanism, adding oxygen atoms in the process to yield ureidoacrylate peracid, that immediately reacts with FMN forming ureidoacrylate and FMN-N(5)-oxide. The FMN-N(5)-oxide reacts spontaneously with NADH to produce FMN. Requires the flavin reductase RutF to regenerate FMN in vivo. In Escherichia coli (strain SE11), this protein is Pyrimidine monooxygenase RutA.